Here is a 378-residue protein sequence, read N- to C-terminus: C-X-C chemokine receptor type 3-2 (378 aa).

The Extracellular portion of the chain corresponds to 1–47; it reads MDNSTTAAEVSAPTDYDYNSTSYDDDNPYAAPCSLTETWNFLGRFAP. Asn-3 and Asn-19 each carry an N-linked (GlcNAc...) asparagine glycan. Residues 48 to 68 form a helical membrane-spanning segment; the sequence is VAYILVFILALVGNILVLCVI. Residues 69–86 are Cytoplasmic-facing; the sequence is RRYRQSRHSPCSFSLTDT. The helical transmembrane segment at 87-107 threads the bilayer; that stretch reads FLLHLAVSDLLLAATLPFFAV. Residues 108 to 121 are Extracellular-facing; it reads EWISEWVFGKVMCK. Cys-120 and Cys-199 are disulfide-bonded. Residues 122–142 traverse the membrane as a helical segment; that stretch reads ITGALFSLNVYCGVLFLACIS. Topologically, residues 143–164 are cytoplasmic; the sequence is FDRYLAIVHAINISWRRKTCHA. A helical membrane pass occupies residues 165 to 185; it reads QLACAFIWVICLGLSMVDMHF. Topologically, residues 186-212 are extracellular; the sequence is RDLVEIPGMNRMVCQIVYSEQYSKQWQ. Residues 213–233 form a helical membrane-spanning segment; it reads IGMQLVSMVLGFILPLLVMLY. Over 234 to 253 the chain is Cytoplasmic; it reads CYLHIFKALCHATRRQKRRS. Residues 254–274 traverse the membrane as a helical segment; the sequence is LRLIISLVIVFVISWAPYNAL. Topologically, residues 275 to 304 are extracellular; the sequence is RMTDSLQMLGVIVKSCALNNVLDVGILVTE. The chain crosses the membrane as a helical span at residues 305 to 325; that stretch reads SLGLAHCALNPLLYGLVGVKF. The Cytoplasmic portion of the chain corresponds to 326-378; the sequence is RRELAQMCKAALGPQGCLGLVGWANGRGSSTRRPTGSFSSVETENTSYFSVMA.

Belongs to the G-protein coupled receptor 1 family.

The protein localises to the cell membrane. Receptor for the C-X-C chemokines cxcl11.1 and cxcl11.6. Promotes macrophage chemotaxis to sites of bacterial infection. The polypeptide is C-X-C chemokine receptor type 3-2 (Danio rerio (Zebrafish)).